We begin with the raw amino-acid sequence, 381 residues long: Chorismate synthase (381 aa).

2 residues coordinate NADP(+): Arg41 and Arg47. FMN is bound by residues 127–129 (RAS), 247–248 (QA), Gly291, 306–310 (KPIPT), and Arg332.

It belongs to the chorismate synthase family. In terms of assembly, homotetramer. FMNH2 is required as a cofactor.

It carries out the reaction 5-O-(1-carboxyvinyl)-3-phosphoshikimate = chorismate + phosphate. It participates in metabolic intermediate biosynthesis; chorismate biosynthesis; chorismate from D-erythrose 4-phosphate and phosphoenolpyruvate: step 7/7. Its function is as follows. Catalyzes the anti-1,4-elimination of the C-3 phosphate and the C-6 proR hydrogen from 5-enolpyruvylshikimate-3-phosphate (EPSP) to yield chorismate, which is the branch point compound that serves as the starting substrate for the three terminal pathways of aromatic amino acid biosynthesis. This reaction introduces a second double bond into the aromatic ring system. In Anaeromyxobacter dehalogenans (strain 2CP-1 / ATCC BAA-258), this protein is Chorismate synthase.